Consider the following 313-residue polypeptide: Solute carrier family 35 member E3 (313 aa).

A run of 10 helical transmembrane segments spans residues 17–37 (GLLL…WIYV), 40–60 (GFPN…GLYV), 77–97 (LLLL…SLQN), 100–120 (IGTY…IQTL), 130–147 (IRLT…NSYY), 153–173 (FLGT…QVWV), 187–206 (LLYY…VPFF), 225–245 (LMVL…YWII), 252–272 (TYNM…YVLF), and 275–295 (PLSI…LAYT).

The protein belongs to the TPT transporter family. SLC35E subfamily.

The protein resides in the membrane. In terms of biological role, putative transporter. In Bos taurus (Bovine), this protein is Solute carrier family 35 member E3 (SLC35E3).